Consider the following 361-residue polypeptide: Chorismate synthase (361 aa).

Residues R48 and R54 each coordinate NADP(+). FMN is bound by residues 125 to 127 (RSS), 238 to 239 (NA), G278, 293 to 297 (KPTSS), and R319.

This sequence belongs to the chorismate synthase family. In terms of assembly, homotetramer. FMNH2 serves as cofactor.

The enzyme catalyses 5-O-(1-carboxyvinyl)-3-phosphoshikimate = chorismate + phosphate. It functions in the pathway metabolic intermediate biosynthesis; chorismate biosynthesis; chorismate from D-erythrose 4-phosphate and phosphoenolpyruvate: step 7/7. In terms of biological role, catalyzes the anti-1,4-elimination of the C-3 phosphate and the C-6 proR hydrogen from 5-enolpyruvylshikimate-3-phosphate (EPSP) to yield chorismate, which is the branch point compound that serves as the starting substrate for the three terminal pathways of aromatic amino acid biosynthesis. This reaction introduces a second double bond into the aromatic ring system. This is Chorismate synthase from Escherichia coli O1:K1 / APEC.